A 356-amino-acid chain; its full sequence is MPPPKKFRVQAKNYFLTYPQCSLTKDEALSQLQNLETPVNKKFIKICRELHENGEPHLHVLIQFEGKYQCTNNRFFDLVSPTRSAHFHPNIQGAKSSSDVKSYIDKDGDTAEWGEFQIDGRSARGGQQTANDSYAKALNAGDVQSALNILKEEQPKDYVLQNHNIRSNLERIFAKAPEPWVPRFPLSSFTAVPEEMQEWADDYFGSGSAARPDRPLSLIVEGDSRTGKTMWARALGPHNYLSGHLDFNGRVYSNEVEYNVIDDVAPHYLKLKHWKELLGAQKDWQSNCKYGKPVQIKGGIPAIVLCNPGEGSSYKEYLDKEENTGLRNWTLKNAIFITLTAPLYQEGTQAGQEEGH.

One can recognise a CRESS-DNA virus Rep endonuclease domain in the interval 8 to 116 (RVQAKNYFLT…DGDTAEWGEF (109 aa)). Residues 15–18 (FLTY) carry the RCR-1 motif. A divalent metal cation contacts are provided by Glu-49, His-57, and His-59. The RCR-2 signature appears at 57–59 (HLH). Residue Tyr-103 is the For DNA cleavage activity of the active site. An RCR-3 motif is present at residues 103 to 106 (YIDK). Asp-107 provides a ligand contact to a divalent metal cation. A binding to RBR1 region spans residues 143 to 153 (VQSALNILKEE). The segment at 156 to 176 (KDYVLQNHNIRSNLERIFAKA) is oligomerization. 221–228 (EGDSRTGK) is an ATP binding site.

The protein belongs to the geminiviridae Rep protein family. Homooligomer. Interacts with the replication enhancer protein (REn). Interacts with host retinoblastoma-related protein 1 (RBR1), and may thereby induce the transcription of host replicative enzymes even if the cell is not dividing anymore. Interacts with host PCNA. Interacts with host SCE1 protein. Requires Mg(2+) as cofactor. Mn(2+) is required as a cofactor.

It is found in the host nucleus. Its function is as follows. Essential for the replication of viral ssDNA. The closed circular ssDNA genome is first converted to a superhelical dsDNA. Rep binds a specific region at the genome origin of replication. It introduces an endonucleolytic nick within the conserved sequence 5'-TAATATTAC-3' in the intergenic region of the genome present in all geminiviruses, thereby initiating the rolling circle replication (RCR). Following cleavage, binds covalently to the 5'-phosphate of DNA as a tyrosyl ester. The cleavage gives rise to a free 3'-OH that serves as a primer for the cellular DNA polymerase. The polymerase synthesizes the (+) strand DNA by rolling circle mechanism. After one round of replication, a Rep-catalyzed nucleotidyl transfer reaction releases a circular single-stranded virus genome, thereby terminating the replication. Displays origin-specific DNA cleavage, nucleotidyl transferase, ATPase and helicase activities. The chain is Replication-associated protein from Abutilon (Upland cotton).